The sequence spans 226 residues: Clarin-3 (226 aa).

Residues 8-28 (LMFLSGFLTSLGSVVVICSIL) form a helical membrane-spanning segment. Residue Asn-46 is glycosylated (N-linked (GlcNAc...) asparagine). The next 3 helical transmembrane spans lie at 92-112 (VVILLLILSLAASVLSSVFTF), 128-148 (GVYTWNGLSASFVFLAMVLFV), and 181-201 (FWLTLHVIFLNIVTAVIIIFY).

It belongs to the clarin family.

Its subcellular location is the membrane. The sequence is that of Clarin-3 (Clrn3) from Mus musculus (Mouse).